We begin with the raw amino-acid sequence, 242 residues long: ATP-dependent dethiobiotin synthetase BioD (242 aa).

ATP is bound at residue 12–17 (EVGKTV). Thr16 is a Mg(2+) binding site. Lys37 is an active-site residue. A substrate-binding site is contributed by Ser41. Residues Asp51 and 112-115 (EGAG) each bind ATP. The Mg(2+) site is built by Asp51 and Glu112.

Belongs to the dethiobiotin synthetase family. Homodimer. The cofactor is Mg(2+).

It localises to the cytoplasm. The catalysed reaction is (7R,8S)-7,8-diammoniononanoate + CO2 + ATP = (4R,5S)-dethiobiotin + ADP + phosphate + 3 H(+). It functions in the pathway cofactor biosynthesis; biotin biosynthesis; biotin from 7,8-diaminononanoate: step 1/2. Catalyzes a mechanistically unusual reaction, the ATP-dependent insertion of CO2 between the N7 and N8 nitrogen atoms of 7,8-diaminopelargonic acid (DAPA, also called 7,8-diammoniononanoate) to form a ureido ring. This chain is ATP-dependent dethiobiotin synthetase BioD, found in Bacillus anthracis (strain A0248).